A 121-amino-acid chain; its full sequence is MTREEMIQAIKEMSVLELNELVKACEEEFGVSAAAPVAVAGVAGAVGAAEEKSEFDVVLANAGSQKIKVIKAVRELTGLGLKEAKEIVDGAPKTLKEGVAKEAAEEMKAKLEEVGATIELK.

The protein belongs to the bacterial ribosomal protein bL12 family. Homodimer. Part of the ribosomal stalk of the 50S ribosomal subunit. Forms a multimeric L10(L12)X complex, where L10 forms an elongated spine to which 2 to 4 L12 dimers bind in a sequential fashion. Binds GTP-bound translation factors.

Its function is as follows. Forms part of the ribosomal stalk which helps the ribosome interact with GTP-bound translation factors. Is thus essential for accurate translation. This chain is Large ribosomal subunit protein bL12, found in Clostridium novyi (strain NT).